A 179-amino-acid chain; its full sequence is ATP synthase subunit delta (179 aa).

The protein belongs to the ATPase delta chain family. F-type ATPases have 2 components, F(1) - the catalytic core - and F(0) - the membrane proton channel. F(1) has five subunits: alpha(3), beta(3), gamma(1), delta(1), epsilon(1). F(0) has three main subunits: a(1), b(2) and c(10-14). The alpha and beta chains form an alternating ring which encloses part of the gamma chain. F(1) is attached to F(0) by a central stalk formed by the gamma and epsilon chains, while a peripheral stalk is formed by the delta and b chains.

The protein resides in the cell inner membrane. Its function is as follows. F(1)F(0) ATP synthase produces ATP from ADP in the presence of a proton or sodium gradient. F-type ATPases consist of two structural domains, F(1) containing the extramembraneous catalytic core and F(0) containing the membrane proton channel, linked together by a central stalk and a peripheral stalk. During catalysis, ATP synthesis in the catalytic domain of F(1) is coupled via a rotary mechanism of the central stalk subunits to proton translocation. Functionally, this protein is part of the stalk that links CF(0) to CF(1). It either transmits conformational changes from CF(0) to CF(1) or is implicated in proton conduction. The protein is ATP synthase subunit delta of Burkholderia vietnamiensis (strain G4 / LMG 22486) (Burkholderia cepacia (strain R1808)).